A 238-amino-acid chain; its full sequence is Ribonuclease PH (238 aa).

Residues R86 and 124–126 (GTR) each bind phosphate.

This sequence belongs to the RNase PH family. In terms of assembly, homohexameric ring arranged as a trimer of dimers.

The catalysed reaction is tRNA(n+1) + phosphate = tRNA(n) + a ribonucleoside 5'-diphosphate. Functionally, phosphorolytic 3'-5' exoribonuclease that plays an important role in tRNA 3'-end maturation. Removes nucleotide residues following the 3'-CCA terminus of tRNAs; can also add nucleotides to the ends of RNA molecules by using nucleoside diphosphates as substrates, but this may not be physiologically important. Probably plays a role in initiation of 16S rRNA degradation (leading to ribosome degradation) during starvation. This Azorhizobium caulinodans (strain ATCC 43989 / DSM 5975 / JCM 20966 / LMG 6465 / NBRC 14845 / NCIMB 13405 / ORS 571) protein is Ribonuclease PH.